Here is a 524-residue protein sequence, read N- to C-terminus: Adhesion G-protein coupled receptor G5 (524 aa).

An N-terminal signal peptide occupies residues 1–23; it reads MDPHGALFFYLCLLAAQVVLVET. The Extracellular segment spans residues 24-246; that stretch reads LSDLLVLMKR…PAELQVPLEY (223 aa). N58, N65, N96, N143, N169, and N175 each carry an N-linked (GlcNAc...) asparagine glycan. The 162-residue stretch at 74–235 folds into the GAIN-B domain; sequence QSLVFKLSCD…AVLMQLSGDP (162 aa). 2 disulfide bridges follow: C185–C217 and C205–C219. A GPS region spans residues 185–235; it reads CVFWKEGASKSSWGAWSPEGCYTEQPSATQVLCHCNHLTYFAVLMQLSGDP. The stachel stretch occupies residues 224-232; sequence YFAVLMQLS. Residues 247–267 form a helical membrane-spanning segment; sequence ISFVGCSISIVASLLTILLYA. The Cytoplasmic segment spans residues 268–284; sequence QSRKQSDSTTRIHMNLN. A helical transmembrane segment spans residues 285-305; sequence GSVLLLNVTFLLSSQMTLPTM. The Extracellular portion of the chain corresponds to 306–319; the sequence is PRPVCKVLAAVLHY. An intrachain disulfide couples C310 to C400. A helical membrane pass occupies residues 320 to 340; it reads ALLSSLTWMAIEGFNLYLFLG. At 341 to 351 the chain is on the cytoplasmic side; sequence RVYNAYIRRYL. A helical transmembrane segment spans residues 352–372; that stretch reads LKLCMLGWGFPALLVLLLLMI. Residues 373 to 413 are Extracellular-facing; it reads KSSVYGPCVTSLSKSQENGTGFQNVSMCWIRSPMVHSILVM. N-linked (GlcNAc...) asparagine glycans are attached at residues N390 and N396. The chain crosses the membrane as a helical span at residues 414 to 434; sequence GYGGFTSLFNLVVLAWALWIL. Residues 435–453 lie on the Cytoplasmic side of the membrane; the sequence is CRLRAREKALSPWAYRDTA. A helical transmembrane segment spans residues 454–476; it reads MVLGLTVLLGTTWTLAFFSFGVF. Topologically, residues 477 to 480 are extracellular; the sequence is LLPQ. Residues 481-500 traverse the membrane as a helical segment; the sequence is LFLFTIFNSLYGFFLFLWFC. The Cytoplasmic portion of the chain corresponds to 501 to 524; that stretch reads SQKRYSDAEAKAEMEAVSSSQMTH.

The protein belongs to the G-protein coupled receptor 2 family. Adhesion G-protein coupled receptor (ADGR) subfamily. In terms of assembly, heterodimer of 2 chains generated by proteolytic processing; the large extracellular N-terminal fragment and the membrane-bound C-terminal fragment predominantly remain associated and non-covalently linked. Post-translationally, autoproteolytically processed at the GPS region of the GAIN-B domain; this cleavage modulates receptor activity. In terms of tissue distribution, expressed at least in kidney, heart, brain and spleen. As to expression, isoform 1 is predominant in spleen. In the kidney, both isoform 1 and isoform 2 are expressed at similar levels. Isoform 2 is the major form in heart and brain. In the kidney, both isoform 1 and isoform 2 are expressed at similar levels.

Its subcellular location is the cell membrane. Its activity is regulated as follows. Forms a heterodimer of 2 chains generated by proteolytic processing that remain associated through non-covalent interactions mediated by the GAIN-B domain. In the inactivated receptor, the Stachel sequence (also named stalk) is embedded in the GAIN-B domain, where it adopts a beta-strand conformation. On activation, the Stachel moves into the 7 transmembrane region and adopts a twisted hook-shaped configuration that forms contacts within the receptor, leading to coupling of a G-alpha protein, which activates signaling. The cleaved GAIN-B and N-terminal domains can then dissociate from the rest of the receptor. Its function is as follows. Orphan adhesion G-protein coupled receptor (aGPCR). Ligand binding causes a conformation change that triggers signaling via guanine nucleotide-binding proteins (G proteins) and modulates the activity of downstream effectors, such as adenylate cyclase. ADGRG5 is specifically coupled to G(s) G proteins and mediates activation of adenylate cyclase activity. Functionally, isoform 1, but not isoform 2, is constitutively active, as evidenced by elevated basal cAMP levels, and responds to mechanical activation (shaking). This Mus musculus (Mouse) protein is Adhesion G-protein coupled receptor G5.